The chain runs to 219 residues: 3-dehydroquinate dehydratase (219 aa).

Residues 28–30 and arginine 61 contribute to the 3-dehydroquinate site; that span reads ELR. Histidine 116 functions as the Proton donor/acceptor in the catalytic mechanism. The active-site Schiff-base intermediate with substrate is the lysine 142. 3-dehydroquinate is bound by residues arginine 180 and glutamine 203.

The protein belongs to the type-I 3-dehydroquinase family. Homodimer.

It carries out the reaction 3-dehydroquinate = 3-dehydroshikimate + H2O. It participates in metabolic intermediate biosynthesis; chorismate biosynthesis; chorismate from D-erythrose 4-phosphate and phosphoenolpyruvate: step 3/7. In terms of biological role, involved in the third step of the chorismate pathway, which leads to the biosynthesis of aromatic amino acids. Catalyzes the cis-dehydration of 3-dehydroquinate (DHQ) and introduces the first double bond of the aromatic ring to yield 3-dehydroshikimate. The sequence is that of 3-dehydroquinate dehydratase from Aquifex aeolicus (strain VF5).